Reading from the N-terminus, the 110-residue chain is UPF0060 membrane protein Rpic_4131 (110 aa).

4 helical membrane-spanning segments follow: residues 8–28 (VLFA…WLVL), 33–53 (PFWL…LLTL), 65–85 (YGGV…GVAL), and 88–108 (WDVG…LQPQ).

This sequence belongs to the UPF0060 family.

Its subcellular location is the cell inner membrane. This is UPF0060 membrane protein Rpic_4131 from Ralstonia pickettii (strain 12J).